A 784-amino-acid chain; its full sequence is Toll-like receptor 2 (784 aa).

The first 20 residues, 1–20 (MPHTLWMVWVLGVIISLSKE), serve as a signal peptide directing secretion. Over 21–587 (ESSNQASLSC…VRLSVSECHR (567 aa)) the chain is Extracellular. Cys30 and Cys36 form a disulfide bridge. LRR repeat units follow at residues 54–77 (VKCLDLSNNRITYISNSDLQRYVN), 78–101 (LQALVLTSNGINTIEEDSFSSLGR), 102–125 (LEHLDLSYNYLSNLSSSWFKPLSS), 126–150 (LKFLNLLGNPYKTLGETSLFSHLTK), 151–175 (LRILRVGNMDTFTKIQRKDFAGLTF), 176–199 (LEELEIDASDLQSYEPKSLKSIQN), 200–223 (VSHLILHMKQHILLLEIFVDLTSS), 224–250 (VECLELRDTDLNTFHFSELSTGETNSL), 251–278 (IKKFTFRNVKITDESLFQVMKLLSQISG), 279–308 (LLELEFDDCTLNGVGDFRGSDNDRVIDPGK), 309–337 (VETLTIRRLHIPQFYSFNDLSTLYPLTER), 338–361 (VKRITVENSKVFLVPCLLSRHLKS), 362–388 (LEYLDLSENLMVEEYLKNSACEDAWPS), 389–414 (LQTLILRQNHLASLGKIGETLLTLKN), 415–437 (LTNLDISKNTFHYMPETCQWPEK), 438–457 (MKYLNLSSTRIHSVTGCIPK), 458–478 (TLEILDISNNNLNLFSLNLPQ), 479–500 (LKELYISRNKLMTLPDASLLPM), and 501–524 (LLVLKISRNTITTFSKEQLDSFHT). Asn114 is a glycosylation site (N-linked (GlcNAc...) asparagine). Asn199 carries an N-linked (GlcNAc...) asparagine glycan. A disulfide bridge connects residues Cys353 and Cys382. An N-linked (GlcNAc...) asparagine glycan is attached at Asn414. A disulfide bridge connects residues Cys432 and Cys454. Asn442 is a glycosylation site (N-linked (GlcNAc...) asparagine). One can recognise an LRRCT domain in the interval 525–579 (LKTLEAGGNNFICSCEFLSFTQEQQALAKVLVDWPANYLCDSPSHVRGQRVQDVR). The chain crosses the membrane as a helical span at residues 588 to 608 (AALVSGMCCALFLLILLMGVL). The Cytoplasmic segment spans residues 609 to 784 (CHRFHGLWYM…WVNLRAAIKS (176 aa)). A TIR domain is found at 639 to 782 (ICYDAFVSYS…GFWVNLRAAI (144 aa)). Residue Lys754 forms a Glycyl lysine isopeptide (Lys-Gly) (interchain with G-Cter in ubiquitin) linkage. Residues 761-778 (YLEWPMDEARQEGFWVNL) carry the ATG16L1-binding motif motif.

This sequence belongs to the Toll-like receptor family. Interacts with LY96, TLR1 and TLR6 (via extracellular domain). TLR2 seems to exist in heterodimers with either TLR1 or TLR6 before stimulation by the ligand. The heterodimers form bigger oligomers in response to their corresponding ligands as well as further heterotypic associations with other receptors such as CD14 and/or CD36. Binds MYD88 (via TIR domain). Interacts with TICAM1. Interacts with CNPY3. Interacts with ATG16L1. Interacts with PPP1R11. Interacts with TICAM2. Interacts with TIRAP. Post-translationally, ubiquitinated at Lys-754 by PPP1R11, leading to its degradation. Deubiquitinated by USP2. In terms of processing, glycosylation of Asn-442 is critical for secretion of the N-terminal ectodomain of TLR2.

Its subcellular location is the membrane. The protein resides in the cytoplasmic vesicle. The protein localises to the phagosome membrane. It is found in the membrane raft. Its function is as follows. Cooperates with LY96 to mediate the innate immune response to bacterial lipoproteins and other microbial cell wall components. Cooperates with TLR1 or TLR6 to mediate the innate immune response to bacterial lipoproteins or lipopeptides. Acts via MYD88 and TRAF6, leading to NF-kappa-B activation, cytokine secretion and the inflammatory response. May also promote apoptosis in response to lipoproteins. Forms activation clusters composed of several receptors depending on the ligand, these clusters trigger signaling from the cell surface and subsequently are targeted to the Golgi in a lipid-raft dependent pathway. Forms the cluster TLR2:TLR6:CD14:CD36 in response to diacylated lipopeptides and TLR2:TLR1:CD14 in response to triacylated lipopeptides. This chain is Toll-like receptor 2 (TLR2), found in Macaca mulatta (Rhesus macaque).